Consider the following 492-residue polypeptide: NAD(P)H-quinone oxidoreductase subunit 2 A, chloroplastic (492 aa).

13 consecutive transmembrane segments (helical) span residues Leu6–Leu26, Thr39–Phe59, Val81–Ile101, Met106–Cys126, Leu131–Tyr151, Tyr165–Gly185, Pro209–Ala229, Trp277–Ile297, Met305–Asp325, Gly329–Ala349, Ala377–Phe397, Leu400–Leu420, and Met466–Ile486.

The protein belongs to the complex I subunit 2 family. In terms of assembly, NDH is composed of at least 16 different subunits, 5 of which are encoded in the nucleus.

Its subcellular location is the plastid. The protein localises to the chloroplast thylakoid membrane. It carries out the reaction a plastoquinone + NADH + (n+1) H(+)(in) = a plastoquinol + NAD(+) + n H(+)(out). The enzyme catalyses a plastoquinone + NADPH + (n+1) H(+)(in) = a plastoquinol + NADP(+) + n H(+)(out). In terms of biological role, NDH shuttles electrons from NAD(P)H:plastoquinone, via FMN and iron-sulfur (Fe-S) centers, to quinones in the photosynthetic chain and possibly in a chloroplast respiratory chain. The immediate electron acceptor for the enzyme in this species is believed to be plastoquinone. Couples the redox reaction to proton translocation, and thus conserves the redox energy in a proton gradient. The chain is NAD(P)H-quinone oxidoreductase subunit 2 A, chloroplastic from Illicium oligandrum (Star anise).